Reading from the N-terminus, the 591-residue chain is Aspartate--tRNA ligase (591 aa).

Glu171 is a binding site for L-aspartate. Positions 195 to 198 (QLFK) are aspartate. Arg217 contributes to the L-aspartate binding site. Residues 217-219 (RDE) and Gln226 each bind ATP. Residue His448 participates in L-aspartate binding. Glu482 lines the ATP pocket. Position 489 (Arg489) interacts with L-aspartate. 534–537 (GLDR) provides a ligand contact to ATP.

The protein belongs to the class-II aminoacyl-tRNA synthetase family. Type 1 subfamily. As to quaternary structure, homodimer.

The protein localises to the cytoplasm. It catalyses the reaction tRNA(Asp) + L-aspartate + ATP = L-aspartyl-tRNA(Asp) + AMP + diphosphate. In terms of biological role, catalyzes the attachment of L-aspartate to tRNA(Asp) in a two-step reaction: L-aspartate is first activated by ATP to form Asp-AMP and then transferred to the acceptor end of tRNA(Asp). This is Aspartate--tRNA ligase from Edwardsiella ictaluri (strain 93-146).